The chain runs to 866 residues: Leucine--tRNA ligase (866 aa).

The short motif at 59–69 (PYPSGDLHMGH) is the 'HIGH' region element. The segment at 393 to 421 (VPVIKTDPQTGEPLLPESAPLESPAETGQ) is disordered. The span at 404-418 (EPLLPESAPLESPAE) shows a compositional bias: low complexity. Positions 628–632 (AMSKS) match the 'KMSKS' region motif. Lys631 provides a ligand contact to ATP.

Belongs to the class-I aminoacyl-tRNA synthetase family.

It is found in the cytoplasm. The enzyme catalyses tRNA(Leu) + L-leucine + ATP = L-leucyl-tRNA(Leu) + AMP + diphosphate. This is Leucine--tRNA ligase from Leifsonia xyli subsp. xyli (strain CTCB07).